Here is a 71-residue protein sequence, read N- to C-terminus: ATP synthase F(0) complex subunit e, mitochondrial (71 aa).

The residue at position 34 (K34) is an N6-acetyllysine. Phosphoserine is present on S68.

It belongs to the ATPase e subunit family. In terms of assembly, component of the ATP synthase complex composed at least of ATP5F1A/subunit alpha, ATP5F1B/subunit beta, ATP5MC1/subunit c (homooctomer), MT-ATP6/subunit a, MT-ATP8/subunit 8, ATP5ME/subunit e, ATP5MF/subunit f, ATP5MG/subunit g, ATP5MK/subunit k, ATP5MJ/subunit j, ATP5F1C/subunit gamma, ATP5F1D/subunit delta, ATP5F1E/subunit epsilon, ATP5PF/subunit F6, ATP5PB/subunit b, ATP5PD/subunit d, ATP5PO/subunit OSCP. ATP synthase complex consists of a soluble F(1) head domain (subunits alpha(3) and beta(3)) - the catalytic core - and a membrane F(0) domain - the membrane proton channel (subunits c, a, 8, e, f, g, k and j). These two domains are linked by a central stalk (subunits gamma, delta, and epsilon) rotating inside the F1 region and a stationary peripheral stalk (subunits F6, b, d, and OSCP).

It is found in the mitochondrion. The protein resides in the mitochondrion inner membrane. Functionally, subunit e, of the mitochondrial membrane ATP synthase complex (F(1)F(0) ATP synthase or Complex V) that produces ATP from ADP in the presence of a proton gradient across the membrane which is generated by electron transport complexes of the respiratory chain. ATP synthase complex consist of a soluble F(1) head domain - the catalytic core - and a membrane F(1) domain - the membrane proton channel. These two domains are linked by a central stalk rotating inside the F(1) region and a stationary peripheral stalk. During catalysis, ATP synthesis in the catalytic domain of F(1) is coupled via a rotary mechanism of the central stalk subunits to proton translocation. In vivo, can only synthesize ATP although its ATP hydrolase activity can be activated artificially in vitro. Part of the complex F(0) domain. This is ATP synthase F(0) complex subunit e, mitochondrial from Pongo abelii (Sumatran orangutan).